The following is a 376-amino-acid chain: Actin, macronuclear (376 aa).

It belongs to the actin family.

The protein localises to the cytoplasm. It localises to the cytoskeleton. The catalysed reaction is ATP + H2O = ADP + phosphate + H(+). Actins are highly conserved proteins that are involved in various types of cell motility and are ubiquitously expressed in all eukaryotic cells. The sequence is that of Actin, macronuclear from Tetrahymena thermophila.